The following is a 916-amino-acid chain: Protein O-GlcNAcase (916 aa).

Residues 1–46 (MVQKESQAALEERESERNANPAAASGASLEQSVAPAPGEDNPSGAG) form a disordered region. A GH84 domain is found at 60 to 336 (FLCGVVEGFY…TLATWYKSNM (277 aa)). The a protein site is built by Gly-67, Lys-98, and Asp-174. The active-site Proton donor is the Asp-175. A protein is bound by residues Tyr-219, 278-280 (WDN), Asp-285, and Asn-313. A Phosphoserine modification is found at Ser-364. The segment at 443–465 (ALSGEPSVLTKEEEKKQPDEEPM) is disordered. The span at 452–461 (TKEEEKKQPD) shows a compositional bias: basic and acidic residues.

Belongs to the glycosyl hydrolase 84 family. As to quaternary structure, monomer. Interacts with CLOCK. Post-translationally, proteolytically cleaved by caspase-3 during apoptosis. The fragments interact with each other; cleavage does not decrease enzyme activity.

It is found in the cytoplasm. The protein resides in the nucleus. The enzyme catalyses 3-O-(N-acetyl-beta-D-glucosaminyl)-L-seryl-[protein] + H2O = N-acetyl-D-glucosamine + L-seryl-[protein]. It carries out the reaction 3-O-(N-acetyl-beta-D-glucosaminyl)-L-threonyl-[protein] + H2O = L-threonyl-[protein] + N-acetyl-D-glucosamine. Cleaves GlcNAc but not GalNAc from O-glycosylated proteins. Deglycosylates a large and diverse number of proteins, such as CRYAB, ELK1, GSDMD, LMNB1 and TAB1. Can use p-nitrophenyl-beta-GlcNAc and 4-methylumbelliferone-GlcNAc as substrates but not p-nitrophenyl-beta-GalNAc or p-nitrophenyl-alpha-GlcNAc (in vitro). Does not bind acetyl-CoA and does not have histone acetyltransferase activity. The sequence is that of Protein O-GlcNAcase from Mus musculus (Mouse).